The primary structure comprises 402 residues: Selenoprotein P (402 aa).

An N-terminal signal peptide occupies residues 1-19 (MWRGLGLALALCLLLTGGT). U59 is a non-standard amino acid (selenocysteine). 2 N-linked (GlcNAc...) asparagine glycosylation sites follow: N83 and N174. A disordered region spans residues 196–291 (KTAEASQRHH…VGSESLQPSL (96 aa)). Basic residues predominate over residues 203–231 (RHHHPHPHSHPHPHPHPHPHPHPHPHHGH). 13 tandem repeats follow at residues 204–205 (HH), 206–207 (HP), 208–209 (HP), 210–211 (HS), 212–213 (HP), 214–215 (HP), 216–217 (HP), 218–219 (HP), 220–221 (HP), 222–223 (HP), 224–225 (HP), 226–227 (HP), and 228–229 (HH). A 13 X 2 AA tandem repeats of H-[PHS] region spans residues 204-229 (HHHPHPHSHPHPHPHPHPHPHPHPHH). Residues 232–247 (QLHENAHLSESPKPDT) show a composition bias toward basic and acidic residues. Basic residues predominate over residues 259-269 (LHHHHHRHKGP). Position 284 is a phosphoserine (S284). Non-standard amino acids (selenocysteine) are located at U297, U307, U338, U350, U363, U365, U372, U388, U390, U397, and U399. Residues 367 to 402 (LPPAAUQAAGQQLNPTEASTKUSUKNKAKMUKUPSN) are disordered.

Belongs to the selenoprotein P family. Post-translationally, phosphorylation sites are present in the extracellular medium. In terms of tissue distribution, brain and kidney. Most prominently expressed in the cerebellar cortex, hippocampus and olfactory bulb.

The protein localises to the secreted. In terms of biological role, constitutes a major selenium pool in the brain and may play an important role in developing and/or modulating the morphology of neurons and/or glial cells. The protein is Selenoprotein P of Bos taurus (Bovine).